The following is a 254-amino-acid chain: NH(3)-dependent NAD(+) synthetase (254 aa).

32–39 (GISGGIDS) serves as a coordination point for ATP. Aspartate 38 serves as a coordination point for Mg(2+). Residue arginine 113 coordinates deamido-NAD(+). An ATP-binding site is contributed by threonine 133. Glutamate 138 is a Mg(2+) binding site. Lysine 146 and aspartate 153 together coordinate deamido-NAD(+). Residues lysine 162 and threonine 184 each contribute to the ATP site. 244–245 (HK) lines the deamido-NAD(+) pocket.

It belongs to the NAD synthetase family. As to quaternary structure, homodimer.

The enzyme catalyses deamido-NAD(+) + NH4(+) + ATP = AMP + diphosphate + NAD(+) + H(+). It functions in the pathway cofactor biosynthesis; NAD(+) biosynthesis; NAD(+) from deamido-NAD(+) (ammonia route): step 1/1. Its function is as follows. Catalyzes the ATP-dependent amidation of deamido-NAD to form NAD. Uses ammonia as a nitrogen source. This chain is NH(3)-dependent NAD(+) synthetase, found in Thermococcus kodakarensis (strain ATCC BAA-918 / JCM 12380 / KOD1) (Pyrococcus kodakaraensis (strain KOD1)).